The following is a 50-amino-acid chain: Insulin (50 aa).

3 cysteine pairs are disulfide-bonded: Cys-7–Cys-36, Cys-19–Cys-49, and Cys-35–Cys-40.

It belongs to the insulin family. In terms of assembly, heterodimer of a B chain and an A chain linked by two disulfide bonds.

It is found in the secreted. Insulin decreases blood glucose concentration. It increases cell permeability to monosaccharides, amino acids and fatty acids. It accelerates glycolysis, the pentose phosphate cycle, and glycogen synthesis in liver. In Myoxocephalus scorpius (Shorthorn sculpin), this protein is Insulin (ins).